The sequence spans 206 residues: Probable chemoreceptor glutamine deamidase CheD (206 aa).

This sequence belongs to the CheD family.

It catalyses the reaction L-glutaminyl-[protein] + H2O = L-glutamyl-[protein] + NH4(+). Probably deamidates glutamine residues to glutamate on methyl-accepting chemotaxis receptors (MCPs), playing an important role in chemotaxis. The sequence is that of Probable chemoreceptor glutamine deamidase CheD from Laribacter hongkongensis (strain HLHK9).